We begin with the raw amino-acid sequence, 242 residues long: MEGWQRAFVLHSRPWSETSLMLDVFTEESGRVRLVAKGARSKRSTLKGALQPFTPLLLRFGGRGEVKTLRSAEAVSLALPLSGITLYSGLYINELLSRVLEYETRFSELFFDYLHCIQSLAGATGTPEPALRRFELALLGHLGYGVNFTHCAGSGEPVDGTMTYRYREEKGFIASVVIDNKTFTGRQLKALNAREFPDADTLRAAKRFTRMALKPYLGGKPLKSRELFRQFMPKRTVKTHYE.

The protein belongs to the RecO family. In terms of assembly, monomer.

Functionally, involved in DNA repair and RecF pathway recombination. In Shigella flexneri serotype 5b (strain 8401), this protein is DNA repair protein RecO.